We begin with the raw amino-acid sequence, 269 residues long: Transmembrane protein 41B (269 aa).

Helical transmembrane passes span 30–50 (TSLLILVSIFTIAAFLMFLVY), 87–107 (FYVQVLVAYFATYVFLQTFAI), 125–147 (LALFLVCLCSGLGASFCYMLSYL), 175–195 (LINYIIFLRITPFLPNWFINI), 203–223 (PLKVFFIGTFLGVAPPSFVAI), and 240–260 (SWNSLFVLMILAILSILPALF). Residues 118–229 (GFLYPFPLAL…FVAIKAGTTL (112 aa)) are VTT domain; required for its function in autophagy.

Belongs to the TMEM41 family.

The protein localises to the endoplasmic reticulum membrane. The protein resides in the endomembrane system. It catalyses the reaction a 1,2-diacyl-sn-glycero-3-phospho-L-serine(in) = a 1,2-diacyl-sn-glycero-3-phospho-L-serine(out). It carries out the reaction cholesterol(in) = cholesterol(out). The catalysed reaction is a 1,2-diacyl-sn-glycero-3-phosphocholine(in) = a 1,2-diacyl-sn-glycero-3-phosphocholine(out). The enzyme catalyses a 1,2-diacyl-sn-glycero-3-phosphoethanolamine(in) = a 1,2-diacyl-sn-glycero-3-phosphoethanolamine(out). Phospholipid scramblase involved in lipid homeostasis and membrane dynamics processes. Has phospholipid scramblase activity toward cholesterol and phosphatidylserine, as well as phosphatidylethanolamine and phosphatidylcholine. Required for autophagosome formation: participates in early stages of autophagosome biogenesis at the endoplasmic reticulum (ER) membrane by reequilibrating the leaflets of the ER as lipids are extracted by ATG2 (ATG2A or ATG2B) to mediate autophagosome assembly. In addition to autophagy, involved in other processes in which phospholipid scramblase activity is required. Required for normal motor neuron development. The polypeptide is Transmembrane protein 41B (Gallus gallus (Chicken)).